The chain runs to 229 residues: Urease accessory protein UreF (229 aa).

It belongs to the UreF family. As to quaternary structure, ureD, UreF and UreG form a complex that acts as a GTP-hydrolysis-dependent molecular chaperone, activating the urease apoprotein by helping to assemble the nickel containing metallocenter of UreC. The UreE protein probably delivers the nickel.

The protein resides in the cytoplasm. Its function is as follows. Required for maturation of urease via the functional incorporation of the urease nickel metallocenter. In Staphylococcus saprophyticus subsp. saprophyticus (strain ATCC 15305 / DSM 20229 / NCIMB 8711 / NCTC 7292 / S-41), this protein is Urease accessory protein UreF.